A 246-amino-acid chain; its full sequence is Probable transcriptional regulatory protein Dshi_2762 (246 aa).

Belongs to the TACO1 family.

Its subcellular location is the cytoplasm. The polypeptide is Probable transcriptional regulatory protein Dshi_2762 (Dinoroseobacter shibae (strain DSM 16493 / NCIMB 14021 / DFL 12)).